The following is a 750-amino-acid chain: MRRCGRHSGPPSLLLLLLLLPPLLLSVPGAYAARLSVLYSSSDPLTLLDADTVRPAVLGSSSAWAVEFFASWCGHCIAFAPTWKELANDVKDWRPALNLAVLDCADETNSAVCREFNIAGFPTVRFFKAFSKNGTGTALPAAGANVQTLRMRLIDALESHRDTWPPACPPLEPAKLKDINEFFTRSKAEYLALIFEREDSYLGREVTLDLSQFHAVAVRRVLNSESDVVSKFAVTDFPSCYLLLRNGSVSRVPVLVESRPFYTSYLRGLPGLTREAPPTTAAPVTPDKIAPTVWKFADRSKIYMADLESALHYILRVEVGKFSVLEGQRLVALKKFVAVLAKYFPGQPLVQNFLHSINDWLQKQQKKKIPYSYFKAALDSRKENAVLAEKVNWIGCQGSEPHFRGFPCSLWVLFHFLTVQAHRYSEAHPQEPADGQEVLQAMRSYVQSFFGCRDCANHFEQMAAASMHQVKSPSNAVLWLWTSHNRVNARLSGALSEDPQFPKVQWPPRELCSACHNEVNGQVPLWDLGATLNFLKAHFSPANIVRDPPAPGPASRRGTQDPEASPNLVMDTLKLETGNSVLGHEQAASAASPGATALDVPAGKPEASGPQELNAGLSMGGASPGQGPPEHTEELLRDVQENAQGQQHLSKRDTEALLLPEVNHLQGPLAPRRGGHSPKQLASILEGEPEALAIQGRRQWLQVLGGGVSFLDISLCVGLYSVSFMGLLAMYTYFRARMRTPKGHVSYPTA.

The N-terminal stretch at 1 to 32 (MRRCGRHSGPPSLLLLLLLLPPLLLSVPGAYA) is a signal peptide. One can recognise a Thioredoxin domain in the interval 33–159 (ARLSVLYSSS…RMRLIDALES (127 aa)). Active-site nucleophile residues include Cys-73 and Cys-76. 2 cysteine pairs are disulfide-bonded: Cys-73–Cys-76 and Cys-104–Cys-113. N-linked (GlcNAc...) asparagine glycans are attached at residues Asn-133 and Asn-246. Residues Cys-396 and Cys-408 are joined by a disulfide bond. The ERV/ALR sulfhydryl oxidase domain occupies 399-506 (SEPHFRGFPC…EDPQFPKVQW (108 aa)). Residues Arg-404, Trp-411, His-415, Asp-454, His-458, 481–488 (WTSHNRVN), Lys-503, and Trp-506 each bind FAD. Cys-452 and Cys-455 are oxidised to a cystine. Residues Cys-512 and Cys-515 are joined by a disulfide bond. 2 disordered regions span residues 545–567 (VRDP…ASPN) and 585–632 (EQAA…PEHT). Residues 587 to 597 (AASAASPGATA) are compositionally biased toward low complexity. The chain crosses the membrane as a helical span at residues 710–730 (FLDISLCVGLYSVSFMGLLAM).

The protein belongs to the quiescin-sulfhydryl oxidase (QSOX) family. Monomer. The cofactor is FAD. In terms of processing, N-glycosylated. O-glycosylated on Thr and Ser residues. Isoform 3: Detected in seminal vesicle fluid (at protein level). Isoform 1: Detected in brain, hypophysis, heart, testis and the seminal vesicle. Isoform 3: Highly expressed in the seminal vesicles followed by testis, heart, brain, thymus, hypophysis and lung. Also expressed in prostate, kidney, spleen, liver.

Its subcellular location is the golgi apparatus membrane. It is found in the secreted. The enzyme catalyses 2 R'C(R)SH + O2 = R'C(R)S-S(R)CR' + H2O2. In terms of biological role, catalyzes the oxidation of sulfhydryl groups in peptide and protein thiols to disulfides with the reduction of oxygen to hydrogen peroxide. Plays a role in disulfide bond formation in a variety of extracellular proteins. In fibroblasts, required for normal incorporation of laminin into the extracellular matrix, and thereby for normal cell-cell adhesion and cell migration. The chain is Sulfhydryl oxidase 1 (Qsox1) from Rattus norvegicus (Rat).